The sequence spans 140 residues: uncharacterized protein (140 aa).

2 consecutive transmembrane segments (helical) span residues 33 to 53 (LLYVFLFIIFANCVVDVKYYF) and 59 to 79 (SLLFVYFFLTLIILLVSFMGF). Residues 89-104 (EAEPDYRKKQESKNQD) show a composition bias toward basic and acidic residues. The disordered stretch occupies residues 89 to 140 (EAEPDYRKKQESKNQDFLKSQSNEPLEYASSSAVELEKEKNTREGLTILESS). Over residues 105-121 (FLKSQSNEPLEYASSSA) the composition is skewed to polar residues.

The protein localises to the membrane. This is an uncharacterized protein from Schizosaccharomyces pombe (strain 972 / ATCC 24843) (Fission yeast).